Reading from the N-terminus, the 219-residue chain is Ribosomal RNA small subunit methyltransferase G (219 aa).

Residues Gly85, Leu90, 136 to 137, and Arg151 each bind S-adenosyl-L-methionine; that span reads VE.

The protein belongs to the methyltransferase superfamily. RNA methyltransferase RsmG family.

It localises to the cytoplasm. It catalyses the reaction guanosine(527) in 16S rRNA + S-adenosyl-L-methionine = N(7)-methylguanosine(527) in 16S rRNA + S-adenosyl-L-homocysteine. Functionally, specifically methylates the N7 position of guanine in position 527 of 16S rRNA. This chain is Ribosomal RNA small subunit methyltransferase G, found in Cellvibrio japonicus (strain Ueda107) (Pseudomonas fluorescens subsp. cellulosa).